A 224-amino-acid polypeptide reads, in one-letter code: Ribose-5-phosphate isomerase A (224 aa).

Residues 26–29 (TGST), 81–84 (DGAD), and 94–97 (KGGG) contribute to the substrate site. Catalysis depends on Glu-103, which acts as the Proton acceptor. Lys-121 serves as a coordination point for substrate.

The protein belongs to the ribose 5-phosphate isomerase family. Homodimer.

The catalysed reaction is aldehydo-D-ribose 5-phosphate = D-ribulose 5-phosphate. Its pathway is carbohydrate degradation; pentose phosphate pathway; D-ribose 5-phosphate from D-ribulose 5-phosphate (non-oxidative stage): step 1/1. Its function is as follows. Catalyzes the reversible conversion of ribose-5-phosphate to ribulose 5-phosphate. The polypeptide is Ribose-5-phosphate isomerase A (Listeria monocytogenes serotype 4b (strain F2365)).